We begin with the raw amino-acid sequence, 326 residues long: Probable cell division protein WhiA (326 aa).

Positions 275–308 form a DNA-binding region, H-T-H motif; that stretch reads SLDELGRLADPPMTKDAIAGRIRRLLAMADKRAL.

The protein belongs to the WhiA family.

Its function is as follows. Involved in cell division and chromosome segregation. In Arthrobacter sp. (strain FB24), this protein is Probable cell division protein WhiA.